Consider the following 247-residue polypeptide: Pulmonary surfactant-associated protein A (247 aa).

An N-terminal signal peptide occupies residues 1 to 19 (MWCSLALILILVTVSGIMC). Asparagine 20 carries N-linked (GlcNAc...) asparagine glycosylation. The Collagen-like domain occupies 27-99 (GSPGIPGTPG…PGERGPPGLP (73 aa)). 9 positions are modified to 4-hydroxyproline: proline 29, proline 32, proline 35, proline 41, proline 53, proline 56, proline 62, proline 66, and proline 69. Positions 32-101 (PGTPGSHGLP…ERGPPGLPAS (70 aa)) are disordered. The span at 41–50 (PGRDGRDGVK) shows a compositional bias: basic and acidic residues. A compositionally biased stretch (pro residues) spans 53-64 (PGPPGPMGPPGV). Over residues 83-92 (ERGDKGDPGE) the composition is skewed to basic and acidic residues. The C-type lectin domain occupies 131–247 (LAVGDKVFAT…LQSRLTICEF (117 aa)). 2 disulfide bridges follow: cysteine 154–cysteine 245 and cysteine 223–cysteine 237. N-linked (GlcNAc...) asparagine glycosylation occurs at asparagine 206. 4 residues coordinate Ca(2+): glutamate 214, arginine 216, asparagine 233, and aspartate 234.

It belongs to the SFTPA family. In terms of assembly, oligomeric complex of 6 set of homotrimers.

It is found in the secreted. The protein localises to the extracellular space. The protein resides in the extracellular matrix. It localises to the surface film. In terms of biological role, in presence of calcium ions, it binds to surfactant phospholipids and contributes to lower the surface tension at the air-liquid interface in the alveoli of the mammalian lung and is essential for normal respiration. Enhances the expression of MYO18A/SP-R210 on alveolar macrophages. The protein is Pulmonary surfactant-associated protein A (SFTPA1) of Cavia porcellus (Guinea pig).